Consider the following 77-residue polypeptide: Conotoxin ArMKLT2-022 (77 aa).

Positions 1–22 (MKLTCVLIVAVLFLTACQLIAA) are cleaved as a signal peptide. A propeptide spanning residues 23 to 46 (DDSRDLKRFSRRKMRDGMLNTKNT) is cleaved from the precursor. The residue at position 49 (Q49) is a Pyrrolidone carboxylic acid. Disulfide bonds link C50–C65, C57–C68, and C64–C73.

Belongs to the conotoxin O1 superfamily. In terms of tissue distribution, expressed by the venom duct.

The protein resides in the secreted. The polypeptide is Conotoxin ArMKLT2-022 (Conus arenatus (Sand-dusted cone)).